The sequence spans 115 residues: T cell receptor beta variable 7-2 (115 aa).

Positions 1–21 are cleaved as a signal peptide; that stretch reads MGTRLLFWVAFCLLGADHTGA. Residues 22–115 form the Ig-like domain; the sequence is GVSQSPSNKV…SAVYLCASSL (94 aa). C42 and C111 form a disulfide bridge.

As to quaternary structure, alpha-beta TR is a heterodimer composed of an alpha and beta chain; disulfide-linked. The alpha-beta TR is associated with the transmembrane signaling CD3 coreceptor proteins to form the TR-CD3 (TcR or TCR). The assembly of alpha-beta TR heterodimers with CD3 occurs in the endoplasmic reticulum where a single alpha-beta TR heterodimer associates with one CD3D-CD3E heterodimer, one CD3G-CD3E heterodimer and one CD247 homodimer forming a stable octameric structure. CD3D-CD3E and CD3G-CD3E heterodimers preferentially associate with TR alpha and TR beta chains, respectively. The association of the CD247 homodimer is the last step of TcR assembly in the endoplasmic reticulum and is required for transport to the cell surface.

It localises to the cell membrane. In terms of biological role, v region of the variable domain of T cell receptor (TR) beta chain that participates in the antigen recognition. Alpha-beta T cell receptors are antigen specific receptors which are essential to the immune response and are present on the cell surface of T lymphocytes. Recognize peptide-major histocompatibility (MH) (pMH) complexes that are displayed by antigen presenting cells (APC), a prerequisite for efficient T cell adaptive immunity against pathogens. Binding of alpha-beta TR to pMH complex initiates TR-CD3 clustering on the cell surface and intracellular activation of LCK that phosphorylates the ITAM motifs of CD3G, CD3D, CD3E and CD247 enabling the recruitment of ZAP70. In turn ZAP70 phosphorylates LAT, which recruits numerous signaling molecules to form the LAT signalosome. The LAT signalosome propagates signal branching to three major signaling pathways, the calcium, the mitogen-activated protein kinase (MAPK) kinase and the nuclear factor NF-kappa-B (NF-kB) pathways, leading to the mobilization of transcription factors that are critical for gene expression and essential for T cell growth and differentiation. The T cell repertoire is generated in the thymus, by V-(D)-J rearrangement. This repertoire is then shaped by intrathymic selection events to generate a peripheral T cell pool of self-MH restricted, non-autoaggressive T cells. Post-thymic interaction of alpha-beta TR with the pMH complexes shapes TR structural and functional avidity. This Homo sapiens (Human) protein is T cell receptor beta variable 7-2.